The chain runs to 518 residues: Glucose-1-phosphate adenylyltransferase large subunit 2, cytosolic (518 aa).

It belongs to the bacterial/plant glucose-1-phosphate adenylyltransferase family. Heterotetramer composed of two small and two large subunits.

Its subcellular location is the cytoplasm. It localises to the cytosol. The catalysed reaction is alpha-D-glucose 1-phosphate + ATP + H(+) = ADP-alpha-D-glucose + diphosphate. The protein operates within glycan biosynthesis; starch biosynthesis. With respect to regulation, activated by 3'phosphoglycerate, inhibited by orthophosphate. Allosteric regulation. Inhibited by inorganic phosphate (Pi). Involved in synthesis of starch. Catalyzes the synthesis of ADP-glucose, a molecule that serves as an activated glycosyl donor for alpha-1,4-glucan synthesis. Essential for starch synthesis in seed endosperm. Is essential for both catalytic and allosteric regulatory properties of the cytosolic heterotetramer enzyme. In Oryza sativa subsp. japonica (Rice), this protein is Glucose-1-phosphate adenylyltransferase large subunit 2, cytosolic.